The primary structure comprises 476 residues: Ureidoglycolate hydrolase (476 aa).

The N-terminal stretch at 1-25 (MESLKRFLCSIALLLISLLLPSSLA) is a signal peptide. Positions 138, 149, 184, and 254 each coordinate Mn(2+). Substrate contacts are provided by residues 183–184 (EE), 254–257 (HIEQ), H290, N340, R353, 423–424 (YH), and H448. The interval 276–391 (APASLKVEFE…LSEFKIVNQD (116 aa)) is involved in dimerization. Position 448 (H448) interacts with Mn(2+).

This sequence belongs to the peptidase M20 family. In terms of assembly, homodimer. Mn(2+) is required as a cofactor. It depends on Ni(2+) as a cofactor. Requires Co(2+) as cofactor.

The protein localises to the endoplasmic reticulum. It catalyses the reaction (S)-ureidoglycolate + H2O + 2 H(+) = glyoxylate + 2 NH4(+) + CO2. It participates in nitrogen metabolism; (S)-allantoin degradation; glyoxylate from (S)-ureidoglycolate: step 1/1. Involved in the catabolism of purine nucleotides. Can use (S)-ureidoglycolate as substrate, but not (R)-ureidoglycolate or allantoate. The sequential activity of AAH, UGLYAH and UAH allows a complete purine breakdown without the intermediate generation of urea. In Arabidopsis thaliana (Mouse-ear cress), this protein is Ureidoglycolate hydrolase.